A 210-amino-acid chain; its full sequence is Secreted isochorismatase effector Isc1 (210 aa).

Residues Asp25, Lys90, and Cys124 contribute to the active site.

It belongs to the isochorismatase family.

Its subcellular location is the secreted. It is found in the host cytoplasm. The protein resides in the host nucleus. It catalyses the reaction isochorismate + H2O = (2S,3S)-2,3-dihydroxy-2,3-dihydrobenzoate + pyruvate. Its function is as follows. Secreted isochorismatase required for full virulence of P.sojae. Suppresses salicylate-mediated innate immunity of the host by disrupting the plant salicylate metabolism pathway via hydrolysis of its isochorismate precursor. This chain is Secreted isochorismatase effector Isc1, found in Phytophthora sojae (strain P6497) (Soybean stem and root rot agent).